The chain runs to 163 residues: Retinoic acid receptor responder protein 2 (163 aa).

An N-terminal signal peptide occupies residues 1–20 (MRRLLIPLALWLGAVGVGVA). Intrachain disulfides connect Cys-77-Cys-87, Cys-98-Cys-117, and Cys-101-Cys-135. Positions 158 to 163 (KALPRS) are excised as a propeptide.

Secreted in an inactive precursor form, prochemerin, which is proteolytically processed by a variety of extracellular proteases to generate forms with differing levels of bioactivity. For example, the removal of six amino acids results in chemerin-157, which exhibits the highest activity, while removal of seven amino acids results in chemerin-156 which has slightly less activity. Some proteases are able to cleave at more than one site and chemerin forms may be sequentially processed by different enzymes to modulate activity levels. The coordinated expression and activity of chemerin-modifying enzymes is essential for regulating its bioactivation, inactivation and, consequently, biological function. Cathepsin G cleaves seven C-terminal amino acids from prochemerin (chemerin-156), elastase is able to cleave six (chemerin-157), eight (chemerin-155) or eleven (chemerin-152), plasmin cleaves five amino acids (chemerin-158), and tryptase cleaves five (chemerin-158) or eight (chemerin-155). Multiple cleavages might be required to fully activate chemerin, with an initial tryptase cleavage resulting in chemerin with low activity (chemerin-158), and a second cleavage by carboxypeptidase N or B producing highly active chemerin (chemerin-157). Expressed at the highest levels in placenta, liver, and white adipose tissue (WAT), and to a lesser extent in many other tissues such as lung, brown adipose tissue, heart, ovary, kidney, skeletal muscle and pancreas. Within WAT, expression is enriched in adipocytes as compared to the stromal vascular fraction. Expression and secretion increases dramatically with adipogenesis. Highly expressed in skin (basal and suprabasal layers of the epidermis, hair follicles and endothelial cells). Expression is elevated in numerous metabolic and inflammatory diseases including psoriasis, obesity, type 2 diabetes, metabolic syndrome and cardiovascular disease.

The protein resides in the secreted. Adipocyte-secreted protein (adipokine) that regulates adipogenesis, metabolism and inflammation through activation of the chemokine-like receptor 1 (CMKLR1). Also acts as a ligand for CMKLR2. Can also bind to C-C chemokine receptor-like 2 (CCRL2), but with a lower affinity than it does to CMKLR1 or CMKLR2. Positively regulates adipocyte differentiation, modulates the expression of adipocyte genes involved in lipid and glucose metabolism and might play a role in angiogenesis, a process essential for the expansion of white adipose tissue. Also acts as a pro-inflammatory adipokine, causing an increase in secretion of pro-inflammatory and prodiabetic adipokines, which further impair adipose tissue metabolic function and have negative systemic effects including impaired insulin sensitivity, altered glucose and lipid metabolism, and a decrease in vascular function in other tissues. Can have both pro- and anti-inflammatory properties depending on the modality of enzymatic cleavage by different classes of proteases. Acts as a chemotactic factor for leukocyte populations expressing CMKLR1, particularly immature plasmacytoid dendritic cells, but also immature myeloid DCs, macrophages and natural killer cells. Exerts an anti-inflammatory role by preventing TNF/TNFA-induced VCAM1 expression and monocytes adhesion in vascular endothelial cells. The effect is mediated via inhibiting activation of NF-kappa-B and CRK/p38 through stimulation of AKT1/NOS3 signaling and nitric oxide production. Its dual role in inflammation and metabolism might provide a link between chronic inflammation and obesity, as well as obesity-related disorders such as type 2 diabetes and cardiovascular disease. Exhibits an antimicrobial function in the skin. The protein is Retinoic acid receptor responder protein 2 (RARRES2) of Homo sapiens (Human).